The chain runs to 74 residues: UPF0346 protein BPUM_1890 (74 aa).

The protein belongs to the UPF0346 family.

The protein is UPF0346 protein BPUM_1890 of Bacillus pumilus (strain SAFR-032).